Consider the following 200-residue polypeptide: Small ribosomal subunit protein uS4 (200 aa).

Positions 1–43 (MARYTGPRGRRDRRAGVMLSSMRKNPLEKKPYPPGEHGRDRQR) are disordered. The span at 25–43 (NPLEKKPYPPGEHGRDRQR) shows a compositional bias: basic and acidic residues. The S4 RNA-binding domain occupies 92 to 158 (LRMDNVVYRM…QPIQEAVEQV (67 aa)).

This sequence belongs to the universal ribosomal protein uS4 family. In terms of assembly, part of the 30S ribosomal subunit. Contacts protein S5. The interaction surface between S4 and S5 is involved in control of translational fidelity.

Its function is as follows. One of the primary rRNA binding proteins, it binds directly to 16S rRNA where it nucleates assembly of the body of the 30S subunit. Functionally, with S5 and S12 plays an important role in translational accuracy. The polypeptide is Small ribosomal subunit protein uS4 (Rubrobacter xylanophilus (strain DSM 9941 / JCM 11954 / NBRC 16129 / PRD-1)).